The chain runs to 73 residues: UPF0057 membrane protein At4g30650 (73 aa).

The next 2 membrane-spanning stretches (helical) occupy residues 4-24 (NMEVFCEILIAILLPPLGVCL) and 37-57 (LVLTILGYIPGIIYALYVIVF).

The protein belongs to the UPF0057 (PMP3) family.

It localises to the membrane. The protein is UPF0057 membrane protein At4g30650 of Arabidopsis thaliana (Mouse-ear cress).